The sequence spans 259 residues: Complement factor D (259 aa).

The first 21 residues, 1-21 (MADRSLHLVVLILLGTALCAA), serve as a signal peptide directing secretion. The propeptide at 22–26 (QPRGR) is activation peptide. Positions 27–254 (ILRGQEAPSH…YVAWIDGVMA (228 aa)) constitute a Peptidase S1 domain. Cys52 and Cys68 form a disulfide bridge. Catalysis depends on charge relay system residues His67 and Asp115. Intrachain disulfides connect Cys149–Cys215, Cys180–Cys196, and Cys205–Cys230. Residue Ser209 is the Charge relay system of the active site. Residues 224–228 (TSGSR) are self-inhibitor loop.

This sequence belongs to the peptidase S1 family. In terms of processing, CFD is activated by the removal of 5 residues at the N-terminus, named activation peptide, by the MASP-3 isoform of MASP1.

It localises to the secreted. It carries out the reaction Selective cleavage of Arg-|-Lys bond in complement factor B when in complex with complement subcomponent C3b or with cobra venom factor.. Circulates in plasma in a mature but self-inhibited form. Activated by factor B (CFB), which displaces the self-inhibition loop. Associates with CFB complexed with complement C3b. Its function is as follows. Serine protease that initiates the alternative pathway of the complement system, a cascade of proteins that leads to phagocytosis and breakdown of pathogens and signaling that strengthens the adaptive immune system. In contrast to other complement pathways (classical, lectin and GZMK) that are directly activated by pathogens or antigen-antibody complexes, the alternative complement pathway is initiated by the spontaneous hydrolysis of complement C3. The alternative complement pathway acts as an amplification loop that enhances complement activation by mediating the formation of C3 and C5 convertases. Activated CFD cleaves factor B (CFB) when the latter is complexed with complement C3b, activating the C3 convertase of the alternative pathway. The sequence is that of Complement factor D (CFD) from Bos taurus (Bovine).